Reading from the N-terminus, the 417-residue chain is Phosphoglycerate kinase 1 (417 aa).

Ser2 is modified (N-acetylserine). 2 positions are modified to phosphoserine: Ser2 and Ser4. N6-succinyllysine is present on Lys6. At Lys11 the chain carries N6-acetyllysine. (2R)-3-phosphoglycerate contacts are provided by Val23, Asp24, Phe25, Asn26, Gln38, and Arg39. The tract at residues 38 to 43 is mitochondrial targeting region exposed following cis-trans isomerization by PIN1 and recognized by the TOM complex for mitochondrial translocation of the protein; that stretch reads QRIKAA. At Lys48 the chain carries N6-acetyllysine; alternate. Lys48 bears the N6-succinyllysine; alternate mark. (2R)-3-phosphoglycerate is bound by residues Ser62, His63, Gly65, and Arg66. Lys75 carries the N6-acetyllysine modification. Tyr76 carries the post-translational modification Phosphotyrosine. Residues Lys86 and Lys91 each carry the N6-acetyllysine modification. Lys97 bears the N6-acetyllysine; alternate mark. An N6-(2-hydroxyisobutyryl)lysine; alternate modification is found at Lys97. Leu122 and Arg123 together coordinate (2R)-3-phosphoglycerate. At Lys131 the chain carries N6-acetyllysine; alternate. Lys131 is subject to N6-malonyllysine; alternate. At Lys146 the chain carries N6-acetyllysine. Residues His170 and Arg171 each contribute to the (2R)-3-phosphoglycerate site. At Lys191 the chain carries N6-succinyllysine. A Phosphotyrosine modification is found at Tyr196. An N6-acetyllysine modification is found at Lys199. Position 203 is a phosphoserine (Ser203). An ADP-binding site is contributed by Gly214. Gly214 contacts CDP. Positions 215 and 216 each coordinate AMP. Ala215 serves as a coordination point for ATP. Ala215 contacts Mg(2+). The residue at position 216 (Lys216) is an N6-(2-hydroxyisobutyryl)lysine. Residues Ala218 and Asp219 each coordinate Mg(2+). Asp219 lines the CDP pocket. Lys220 lines the AMP pocket. Lys220 serves as a coordination point for ATP. At Lys220 the chain carries N6-(2-hydroxyisobutyryl)lysine. Gly238 contributes to the ADP binding site. Residue Gly238 coordinates CDP. Gly239 contributes to the AMP binding site. Gly239 is an ATP binding site. 2 positions are modified to N6-acetyllysine: Lys267 and Lys291. An AMP-binding site is contributed by Gly313. Gly313 lines the ATP pocket. An N6-(2-hydroxyisobutyryl)lysine modification is found at Lys323. The CDP site is built by Gly338, Val340, and Phe343. Phe343 contributes to the ADP binding site. Glu344 contributes to the AMP binding site. An ATP-binding site is contributed by Glu344. N6-acetyllysine is present on Lys361. Positions 375 and 376 each coordinate ATP. Asp375 serves as a coordination point for Mg(2+).

The protein belongs to the phosphoglycerate kinase family. As to quaternary structure, monomer. Interacts with kinase MAPK1/ERK2; the interaction is direct, occurs under hypoxic conditions, and promotes its interaction with PIN1. Interacts with peptidyl-prolyl cis-trans isomerase PIN1; the interaction is direct, occurs under hypoxic conditions, and targets the protein to the mitochondrion by promoting interactions with the TOM complex. Interacts with mitochondrial circRNA mcPGK1 (via its 2nd stem-loop); the interaction is direct and targets the protein to the mitochondrion by promoting interactions with the TOM complex. Interacts with pyruvate dehydrogenase kinase PDK1; the interaction is direct, occurs under hypoxic conditions and leads to PDK1-mediated inhibition of pyruvate dehydrogenase complex activity. Mg(2+) is required as a cofactor. Post-translationally, phosphorylated at Ser-203 by MAPK1/ERK2 under hypoxic conditions, which promotes its mitochondrial targeting.

The protein resides in the cytoplasm. The protein localises to the cytosol. Its subcellular location is the mitochondrion matrix. It carries out the reaction (2R)-3-phosphoglycerate + ATP = (2R)-3-phospho-glyceroyl phosphate + ADP. The enzyme catalyses L-seryl-[protein] + ATP = O-phospho-L-seryl-[protein] + ADP + H(+). It functions in the pathway carbohydrate degradation; glycolysis; pyruvate from D-glyceraldehyde 3-phosphate: step 2/5. Functionally, catalyzes one of the two ATP producing reactions in the glycolytic pathway via the reversible conversion of 1,3-diphosphoglycerate to 3-phosphoglycerate. Both L- and D- forms of purine and pyrimidine nucleotides can be used as substrates, but the activity is much lower on pyrimidines. In addition to its role as a glycolytic enzyme, it seems that PGK-1 acts as a polymerase alpha cofactor protein (primer recognition protein). Acts as a protein kinase when localized to the mitochondrion where it phosphorylates pyruvate dehydrogenase kinase PDK1 to inhibit pyruvate dehydrogenase complex activity and suppress the formation of acetyl-coenzyme A from pyruvate, and consequently inhibit oxidative phosphorylation and promote glycolysis. May play a role in sperm motility. This is Phosphoglycerate kinase 1 (PGK1) from Macaca fascicularis (Crab-eating macaque).